The following is a 138-amino-acid chain: Small ribosomal subunit protein uS12 (138 aa).

The disordered stretch occupies residues 33–55 (KEHTNVSSPQKRGVCTRVGTMTP). D102 carries the post-translational modification 3-methylthioaspartic acid.

Belongs to the universal ribosomal protein uS12 family. In terms of assembly, part of the 30S ribosomal subunit. Contacts proteins S8 and S17. May interact with IF1 in the 30S initiation complex.

With S4 and S5 plays an important role in translational accuracy. Functionally, interacts with and stabilizes bases of the 16S rRNA that are involved in tRNA selection in the A site and with the mRNA backbone. Located at the interface of the 30S and 50S subunits, it traverses the body of the 30S subunit contacting proteins on the other side and probably holding the rRNA structure together. The combined cluster of proteins S8, S12 and S17 appears to hold together the shoulder and platform of the 30S subunit. This is Small ribosomal subunit protein uS12 from Bacillus licheniformis (strain ATCC 14580 / DSM 13 / JCM 2505 / CCUG 7422 / NBRC 12200 / NCIMB 9375 / NCTC 10341 / NRRL NRS-1264 / Gibson 46).